The sequence spans 752 residues: Ribosomal protein S6 kinase 2 alpha (752 aa).

Positions 80–339 constitute a Protein kinase 1 domain; that stretch reads FELLKVLGQG…AEEIKRHPFY (260 aa). ATP is bound by residues 86 to 94 and Lys-112; that span reads LGQGSFGKV. The active-site Proton acceptor is Asp-205. Ser-239 carries the post-translational modification Phosphoserine. One can recognise an AGC-kinase C-terminal domain in the interval 340–409; that stretch reads STIDWNKLYR…VATGLMEDSK (70 aa). A Phosphothreonine modification is found at Thr-377. The residue at position 381 (Ser-381) is a Phosphoserine. A Phosphoserine; by autocatalysis modification is found at Ser-398. A Protein kinase 2 domain is found at 435–692; it reads YVVKEAIGVG…AKQVLQHPWI (258 aa). Residues 441–449 and Lys-464 each bind ATP; that span reads IGVGSYSVC. The Proton acceptor role is filled by Asp-552. Thr-590 carries the phosphothreonine modification. The residue at position 749 (Ser-749) is a Phosphoserine.

The protein belongs to the protein kinase superfamily. AGC Ser/Thr protein kinase family. S6 kinase subfamily. The cofactor is Mg(2+). In terms of processing, autophosphorylated on Ser-398, as part of the activation process. As to expression, small and large intestine, spleen, stomach, and bursa, and to a lesser extent lung and kidney.

It carries out the reaction L-seryl-[protein] + ATP = O-phospho-L-seryl-[protein] + ADP + H(+). The catalysed reaction is L-threonyl-[protein] + ATP = O-phospho-L-threonyl-[protein] + ADP + H(+). Activated by multiple phosphorylations on threonine and serine residues. Its function is as follows. Serine/threonine kinase that may play a role in mediating the growth-factor and stress induced activation of transcription. The protein is Ribosomal protein S6 kinase 2 alpha (RPS6KA) of Gallus gallus (Chicken).